The sequence spans 330 residues: Interleukin-12 subunit beta (330 aa).

An N-terminal signal peptide occupies residues 1–22 (MHPQQLVVSWFSLVLLASPIMA). The Ig-like C2-type domain occupies 23–106 (IWELEKNVYV…LSHSLLLLHK (84 aa)). The cysteines at positions 50 and 90 are disulfide-linked. Asn-136 and Asn-224 each carry an N-linked (GlcNAc...) asparagine glycan. Residues 239–330 (PPKNLQLKPL…WSEWASVSCS (92 aa)) form the Fibronectin type-III domain.

This sequence belongs to the IL-12B family. As to quaternary structure, heterodimer with IL12A; disulfide-linked. The heterodimer is known as interleukin IL-12. Heterodimer with IL23A; disulfide-linked. The heterodimer is known as interleukin IL-23. Also secreted as a monomer. Interacts with NBR1; this interaction promotes IL-12 secretion.

It localises to the secreted. Its function is as follows. Cytokine that can act as a growth factor for activated T and NK cells, enhance the lytic activity of NK/lymphokine-activated killer cells, and stimulate the production of IFN-gamma by resting PBMC. Functionally, associates with IL23A to form the IL-23 interleukin, a heterodimeric cytokine which functions in innate and adaptive immunity. IL-23 may constitute with IL-17 an acute response to infection in peripheral tissues. IL-23 binds to a heterodimeric receptor complex composed of IL12RB1 and IL23R, activates the Jak-Stat signaling cascade, stimulates memory rather than naive T-cells and promotes production of pro-inflammatory cytokines. IL-23 induces autoimmune inflammation and thus may be responsible for autoimmune inflammatory diseases and may be important for tumorigenesis. This is Interleukin-12 subunit beta (IL12B) from Lama glama (Llama).